The following is a 617-amino-acid chain: Putative metal ion transporter C17A12.14 (617 aa).

The disordered stretch occupies residues 1 to 141; the sequence is MPSNTSRSVP…GKNTRDQPSP (141 aa). Residue S105 is modified to Phosphoserine. Residues 117 to 136 show a composition bias toward basic and acidic residues; the sequence is SHPEDIQRKEFETENGKNTR. Residues S152, S162, S226, and S241 each carry the phosphoserine modification. 2 helical membrane-spanning segments follow: residues 560–580 and 590–610; these read TILGTILIPLNLVTGLWGMNV and LGWFFSILGSLMIFAISSFIL.

This sequence belongs to the CorA metal ion transporter (MIT) (TC 1.A.35) family. As to quaternary structure, interacts with sad1.

It localises to the membrane. This Schizosaccharomyces pombe (strain 972 / ATCC 24843) (Fission yeast) protein is Putative metal ion transporter C17A12.14.